We begin with the raw amino-acid sequence, 116 residues long: Iron-sulfur cluster insertion protein ErpA (116 aa).

The iron-sulfur cluster site is built by cysteine 44, cysteine 108, and cysteine 110.

Belongs to the HesB/IscA family. Homodimer. Iron-sulfur cluster serves as cofactor.

Functionally, required for insertion of 4Fe-4S clusters for at least IspG. The polypeptide is Iron-sulfur cluster insertion protein ErpA (Shewanella pealeana (strain ATCC 700345 / ANG-SQ1)).